The chain runs to 103 residues: Large ribosomal subunit protein bL21 (103 aa).

This sequence belongs to the bacterial ribosomal protein bL21 family. Part of the 50S ribosomal subunit. Contacts protein L20.

This protein binds to 23S rRNA in the presence of protein L20. In Polynucleobacter necessarius subsp. necessarius (strain STIR1), this protein is Large ribosomal subunit protein bL21.